Here is an 84-residue protein sequence, read N- to C-terminus: NAD(P)H-quinone oxidoreductase subunit O (84 aa).

This sequence belongs to the complex I NdhO subunit family. In terms of assembly, NDH-1 can be composed of about 15 different subunits; different subcomplexes with different compositions have been identified which probably have different functions.

The protein resides in the cellular thylakoid membrane. The enzyme catalyses a plastoquinone + NADH + (n+1) H(+)(in) = a plastoquinol + NAD(+) + n H(+)(out). The catalysed reaction is a plastoquinone + NADPH + (n+1) H(+)(in) = a plastoquinol + NADP(+) + n H(+)(out). Functionally, NDH-1 shuttles electrons from an unknown electron donor, via FMN and iron-sulfur (Fe-S) centers, to quinones in the respiratory and/or the photosynthetic chain. The immediate electron acceptor for the enzyme in this species is believed to be plastoquinone. Couples the redox reaction to proton translocation, and thus conserves the redox energy in a proton gradient. Cyanobacterial NDH-1 also plays a role in inorganic carbon-concentration. The chain is NAD(P)H-quinone oxidoreductase subunit O from Synechococcus sp. (strain CC9902).